The primary structure comprises 642 residues: Putative ATP-binding protein YdiF (642 aa).

ABC transporter domains are found at residues 4-259 (LQVN…EKDL) and 327-541 (LRVQ…ELEK). Residues 36–43 (GRNGAGKS) and 360–367 (GPNGIGKS) contribute to the ATP site. Composition is skewed to basic and acidic residues over residues 541–550 (KMNQQEETDK) and 557–567 (SDSKRSYEEEK). A disordered region spans residues 541–567 (KMNQQEETDKTPATVKSDSKRSYEEEK).

This sequence belongs to the ABC transporter superfamily. ABCF family. YdiF subfamily.

The polypeptide is Putative ATP-binding protein YdiF (ydiF) (Bacillus subtilis (strain 168)).